The primary structure comprises 154 residues: Holo-[acyl-carrier-protein] synthase (154 aa).

Aspartate 8 and glutamate 57 together coordinate Mg(2+).

This sequence belongs to the P-Pant transferase superfamily. AcpS family. The cofactor is Mg(2+).

It is found in the cytoplasm. The catalysed reaction is apo-[ACP] + CoA = holo-[ACP] + adenosine 3',5'-bisphosphate + H(+). Functionally, transfers the 4'-phosphopantetheine moiety from coenzyme A to a Ser of acyl-carrier-protein. The protein is Holo-[acyl-carrier-protein] synthase of Nitrosococcus oceani (strain ATCC 19707 / BCRC 17464 / JCM 30415 / NCIMB 11848 / C-107).